Here is a 453-residue protein sequence, read N- to C-terminus: Exodeoxyribonuclease 7 large subunit (453 aa).

The protein belongs to the XseA family. In terms of assembly, heterooligomer composed of large and small subunits.

It localises to the cytoplasm. It catalyses the reaction Exonucleolytic cleavage in either 5'- to 3'- or 3'- to 5'-direction to yield nucleoside 5'-phosphates.. Functionally, bidirectionally degrades single-stranded DNA into large acid-insoluble oligonucleotides, which are then degraded further into small acid-soluble oligonucleotides. The protein is Exodeoxyribonuclease 7 large subunit of Geobacter metallireducens (strain ATCC 53774 / DSM 7210 / GS-15).